We begin with the raw amino-acid sequence, 80 residues long: RNA-binding protein Hfq (80 aa).

In terms of domain architecture, Sm spans 10 to 69 (DPFLNALRKEHVPVSIYLVNGIKLQGNIESFDQYVVLLRNTVTQMVYKHAISTVVPARPV).

Belongs to the Hfq family. As to quaternary structure, homohexamer.

Functionally, RNA chaperone that binds small regulatory RNA (sRNAs) and mRNAs to facilitate mRNA translational regulation in response to envelope stress, environmental stress and changes in metabolite concentrations. Also binds with high specificity to tRNAs. In Burkholderia ambifaria (strain ATCC BAA-244 / DSM 16087 / CCUG 44356 / LMG 19182 / AMMD) (Burkholderia cepacia (strain AMMD)), this protein is RNA-binding protein Hfq.